The chain runs to 460 residues: Photosystem II CP43 reaction center protein (460 aa).

Topologically, residues methionine 1 to lysine 35 are cytoplasmic. Residues leucine 36–glutamate 58 form a helical membrane-spanning segment. Over valine 59–phenylalanine 98 the chain is Lumenal, thylakoid. Residues phenylalanine 99–leucine 121 form a helical membrane-spanning segment. Residues arginine 122–asparagine 142 lie on the Cytoplasmic side of the membrane. The chain crosses the membrane as a helical span at residues glutamine 143–lysine 165. Residues alanine 166–isoleucine 220 lie on the Lumenal, thylakoid side of the membrane. Residues isoleucine 221 to leucine 240 form a helical membrane-spanning segment. Topologically, residues threonine 241–glycine 255 are cytoplasmic. The helical transmembrane segment at glutamate 256–phenylalanine 276 threads the bilayer. The Lumenal, thylakoid segment spans residues valine 277 to alanine 411. Residues glutamate 341 and arginine 344 each contribute to the [CaMn4O5] cluster site. The chain crosses the membrane as a helical span at residues tryptophan 412 to arginine 436. Residues alanine 437–aspartate 460 are Cytoplasmic-facing.

It belongs to the PsbB/PsbC family. PsbC subfamily. As to quaternary structure, PSII is composed of 1 copy each of membrane proteins PsbA, PsbB, PsbC, PsbD, PsbE, PsbF, PsbH, PsbI, PsbJ, PsbK, PsbL, PsbM, PsbT, PsbX, PsbY, PsbZ, Psb30/Ycf12, peripheral proteins PsbO, CyanoQ (PsbQ), PsbU, PsbV and a large number of cofactors. It forms dimeric complexes. Binds multiple chlorophylls and provides some of the ligands for the Ca-4Mn-5O cluster of the oxygen-evolving complex. It may also provide a ligand for a Cl- that is required for oxygen evolution. PSII binds additional chlorophylls, carotenoids and specific lipids. is required as a cofactor.

Its subcellular location is the cellular thylakoid membrane. One of the components of the core complex of photosystem II (PSII). PSII binds chlorophyll and helps catalyze the primary light-induced photochemical processes of PSII. PSII is a light-driven water:plastoquinone oxidoreductase, using light energy to abstract electrons from H(2)O, generating O(2) and a proton gradient subsequently used for ATP formation. Required for correct assembly of PSII. The sequence is that of Photosystem II CP43 reaction center protein from Synechocystis sp. (strain ATCC 27184 / PCC 6803 / Kazusa).